We begin with the raw amino-acid sequence, 346 residues long: Eukaryotic translation initiation factor 3 subunit I (346 aa).

WD repeat units follow at residues 8–49 (GHER…GTYH), 50–91 (GHQG…KTWD), 145–184 (CEDS…LLYN), 189–228 (ELNQ…VLKT), and 286–325 (GHFG…FDFM).

It belongs to the eIF-3 subunit I family. As to quaternary structure, component of the eukaryotic translation initiation factor 3 (eIF-3) complex.

It is found in the cytoplasm. Its function is as follows. Component of the eukaryotic translation initiation factor 3 (eIF-3) complex, which is involved in protein synthesis of a specialized repertoire of mRNAs and, together with other initiation factors, stimulates binding of mRNA and methionyl-tRNAi to the 40S ribosome. The eIF-3 complex specifically targets and initiates translation of a subset of mRNAs involved in cell proliferation. This Neurospora crassa (strain ATCC 24698 / 74-OR23-1A / CBS 708.71 / DSM 1257 / FGSC 987) protein is Eukaryotic translation initiation factor 3 subunit I (tif-34).